Here is a 66-residue protein sequence, read N- to C-terminus: Toxin BeM14 (66 aa).

The 65-residue stretch at 2-66 folds into the LCN-type CS-alpha/beta domain; it reads RDAYIADDRN…IRKIPGEECR (65 aa). Cystine bridges form between C12–C65, C16–C36, C22–C46, and C26–C48.

Belongs to the long (4 C-C) scorpion toxin superfamily. Sodium channel inhibitor family. Alpha subfamily. Expressed by the venom gland.

It is found in the secreted. Alpha toxins bind voltage-independently at site-3 of sodium channels (Nav) and inhibit the inactivation of the activated channels, thereby blocking neuronal transmission. Has paralytic activity in mice. This chain is Toxin BeM14, found in Mesobuthus eupeus (Lesser Asian scorpion).